Here is a 520-residue protein sequence, read N- to C-terminus: Glutamate decarboxylase-like protein FG08083 (520 aa).

86–88 (KLV) contacts substrate. Lysine 300 is subject to N6-(pyridoxal phosphate)lysine. Residues 338–357 (KNGVSSEQSANTNGSEKESW) form a disordered region. Residues 340–351 (GVSSEQSANTNG) show a composition bias toward polar residues. Substrate is bound at residue arginine 492.

The protein belongs to the group II decarboxylase family. The cofactor is pyridoxal 5'-phosphate.

It participates in mycotoxin biosynthesis. Functionally, glutamate decarboxylase-like protein; part of the gene cluster that mediates the biosynthesis of butenolide, a mycotoxin that shows antibiotic activity but does not seem to play a major role in the spread of head blight in wheat. Butenolide is derived from glutamic acid via a 4-acetamido-2-butenoic acid intermediate. The predicted function of the NADH:flavin oxidoreductase FG08077, the cytochrome P450 monooxygenase FG08079, the decarboxylase FG08083, and the putative acetyltransferase FG08082 are consistent with this pathway, however, the respective activities of the butelonide biosynthesis cluster enzymes have still to be experimentally determined. This is Glutamate decarboxylase-like protein FG08083 from Gibberella zeae (strain ATCC MYA-4620 / CBS 123657 / FGSC 9075 / NRRL 31084 / PH-1) (Wheat head blight fungus).